The following is a 310-amino-acid chain: Tryptophan 2,3-dioxygenase (310 aa).

A disordered region spans residues 1 to 36; it reads MQPPGEDAPAGCPFSGARAAHSAPAAPAAHEASHVP. Residues 15 to 36 show a composition bias toward low complexity; it reads SGARAAHSAPAAPAAHEASHVP. Residues 79 to 83, Tyr-141, and Arg-145 contribute to the substrate site; that span reads FIIQH. His-268 lines the heme pocket. Thr-282 is a substrate binding site.

This sequence belongs to the tryptophan 2,3-dioxygenase family. Homotetramer. Heme serves as cofactor.

It catalyses the reaction L-tryptophan + O2 = N-formyl-L-kynurenine. It functions in the pathway amino-acid degradation; L-tryptophan degradation via kynurenine pathway; L-kynurenine from L-tryptophan: step 1/2. Its function is as follows. Heme-dependent dioxygenase that catalyzes the oxidative cleavage of the L-tryptophan (L-Trp) pyrrole ring and converts L-tryptophan to N-formyl-L-kynurenine. Catalyzes the oxidative cleavage of the indole moiety. The sequence is that of Tryptophan 2,3-dioxygenase from Burkholderia lata (strain ATCC 17760 / DSM 23089 / LMG 22485 / NCIMB 9086 / R18194 / 383).